The primary structure comprises 424 residues: Enolase (424 aa).

Gln-162 contributes to the (2R)-2-phosphoglycerate binding site. The Proton donor role is filled by Glu-204. 3 residues coordinate Mg(2+): Asp-241, Glu-284, and Asp-311. Positions 336, 365, 366, and 387 each coordinate (2R)-2-phosphoglycerate. The active-site Proton acceptor is the Lys-336.

It belongs to the enolase family. It depends on Mg(2+) as a cofactor.

Its subcellular location is the cytoplasm. It is found in the secreted. It localises to the cell surface. The catalysed reaction is (2R)-2-phosphoglycerate = phosphoenolpyruvate + H2O. Its pathway is carbohydrate degradation; glycolysis; pyruvate from D-glyceraldehyde 3-phosphate: step 4/5. Its function is as follows. Catalyzes the reversible conversion of 2-phosphoglycerate (2-PG) into phosphoenolpyruvate (PEP). It is essential for the degradation of carbohydrates via glycolysis. The polypeptide is Enolase (Maricaulis maris (strain MCS10) (Caulobacter maris)).